The primary structure comprises 82 residues: Large ribosomal subunit protein bL28 (82 aa).

Positions 1–25 (MAKVDQITKKRAMTGNTRSHALNHS) are disordered.

This sequence belongs to the bacterial ribosomal protein bL28 family.

The chain is Large ribosomal subunit protein bL28 from Malacoplasma penetrans (strain HF-2) (Mycoplasma penetrans).